The following is a 942-amino-acid chain: Nuclear receptor coactivator 7 (942 aa).

Position 1 is an N-acetylmethionine (M1). Over residues 1 to 12 (MDTKEEKKERKQ) the composition is skewed to basic and acidic residues. A disordered region spans residues 1 to 46 (MDTKEEKKERKQSYFARLKKKKQAKQNAETASAVATRTHTGKEDNN). A coiled-coil region spans residues 4–29 (KEEKKERKQSYFARLKKKKQAKQNAE). Positions 25-38 (KQNAETASAVATRT) are enriched in polar residues. S89 bears the Phosphoserine mark. Residues 114-157 (MEYTAGNQDTLNSIALKFNITPNKLVELNKLFTHTIVPGQVLFV) form the LysM domain. T134 carries the phosphothreonine modification. Positions 161-188 (NSPSSTLRLSSSSPGATVSPSSSDAEYD) are disordered. Positions 162–183 (SPSSTLRLSSSSPGATVSPSSS) are enriched in low complexity. S179, S183, S208, S209, and S211 each carry phosphoserine. The tract at residues 324–416 (KFKSINKEKR…ENFLGEDDDF (93 aa)) is disordered. Residues 356–368 (GHTPTKPSGSSVS) are compositionally biased toward polar residues. Residues 369–381 (EKLKKLDSSRETS) are compositionally biased toward basic and acidic residues. Residues S441, S500, and S502 each carry the phosphoserine modification. The TLDc domain occupies 781 to 942 (ALLENMHIEQ…VQDLEVWAFD (162 aa)).

The protein belongs to the OXR1 family. Interacts with ESR1, ESR2A, ESR2B, THRB, PPARG and RARA in a ligand-inducible manner. Interacts with the heterodimer AHR-ARNT. Highly expressed in brain. Weakly expressed in mammary gland, ovary, uterus, prostate, stomach, bladder, spinal cord and pancreas. Expressed in cancer cell line.

The protein localises to the nucleus. Enhances the transcriptional activities of several nuclear receptors. Involved in the coactivation of different nuclear receptors, such as ESR1, THRB, PPARG and RARA. This chain is Nuclear receptor coactivator 7 (NCOA7), found in Homo sapiens (Human).